The sequence spans 365 residues: uncharacterized protein (365 aa).

Residues 18-46 adopt a coiled-coil conformation; that stretch reads TAQEALTLIEKLDSDYKEKEEKITALSVH.

This is an uncharacterized protein from Bacillus subtilis (strain 168).